The chain runs to 312 residues: D-alanine--D-alanine ligase (312 aa).

One can recognise an ATP-grasp domain in the interval lysine 99–methionine 304. Residue leucine 131–threonine 186 coordinates ATP. Mg(2+)-binding residues include aspartate 257, glutamate 271, and asparagine 273.

Belongs to the D-alanine--D-alanine ligase family. It depends on Mg(2+) as a cofactor. Mn(2+) serves as cofactor.

The protein resides in the cytoplasm. It carries out the reaction 2 D-alanine + ATP = D-alanyl-D-alanine + ADP + phosphate + H(+). The protein operates within cell wall biogenesis; peptidoglycan biosynthesis. Its function is as follows. Cell wall formation. This Carboxydothermus hydrogenoformans (strain ATCC BAA-161 / DSM 6008 / Z-2901) protein is D-alanine--D-alanine ligase.